The following is a 147-amino-acid chain: Large ribosomal subunit protein uL15 (147 aa).

Over residues 1–15 (MKLHELKPAKGAVKE) the composition is skewed to basic and acidic residues. A disordered region spans residues 1 to 47 (MKLHELKPAKGAVKEVKRKGRGRATGNGKTAGRGHNGQNSRSGGGVR). The span at 23-35 (RATGNGKTAGRGH) shows a compositional bias: gly residues.

The protein belongs to the universal ribosomal protein uL15 family. Part of the 50S ribosomal subunit.

In terms of biological role, binds to the 23S rRNA. This is Large ribosomal subunit protein uL15 from Alkaliphilus metalliredigens (strain QYMF).